The chain runs to 433 residues: UPF0597 protein PG_0909 (433 aa).

This sequence belongs to the UPF0597 family.

This chain is UPF0597 protein PG_0909, found in Porphyromonas gingivalis (strain ATCC BAA-308 / W83).